The chain runs to 426 residues: Dihydroorotase (426 aa).

Residues His58 and His60 each coordinate Zn(2+). Substrate contacts are provided by residues 60–62 and Asn92; that span reads HLR. The Zn(2+) site is built by Asp150, His177, and His230. Asn276 provides a ligand contact to substrate. Position 303 (Asp303) interacts with Zn(2+). Residue Asp303 is part of the active site. Residues His307 and 321–322 each bind substrate; that span reads FG.

It belongs to the metallo-dependent hydrolases superfamily. DHOase family. Class I DHOase subfamily. Requires Zn(2+) as cofactor.

The enzyme catalyses (S)-dihydroorotate + H2O = N-carbamoyl-L-aspartate + H(+). Its pathway is pyrimidine metabolism; UMP biosynthesis via de novo pathway; (S)-dihydroorotate from bicarbonate: step 3/3. Its function is as follows. Catalyzes the reversible cyclization of carbamoyl aspartate to dihydroorotate. The protein is Dihydroorotase of Listeria welshimeri serovar 6b (strain ATCC 35897 / DSM 20650 / CCUG 15529 / CIP 8149 / NCTC 11857 / SLCC 5334 / V8).